The following is a 572-amino-acid chain: Proline--tRNA ligase (572 aa).

It belongs to the class-II aminoacyl-tRNA synthetase family. ProS type 1 subfamily. In terms of assembly, homodimer.

The protein resides in the cytoplasm. The catalysed reaction is tRNA(Pro) + L-proline + ATP = L-prolyl-tRNA(Pro) + AMP + diphosphate. In terms of biological role, catalyzes the attachment of proline to tRNA(Pro) in a two-step reaction: proline is first activated by ATP to form Pro-AMP and then transferred to the acceptor end of tRNA(Pro). As ProRS can inadvertently accommodate and process non-cognate amino acids such as alanine and cysteine, to avoid such errors it has two additional distinct editing activities against alanine. One activity is designated as 'pretransfer' editing and involves the tRNA(Pro)-independent hydrolysis of activated Ala-AMP. The other activity is designated 'posttransfer' editing and involves deacylation of mischarged Ala-tRNA(Pro). The misacylated Cys-tRNA(Pro) is not edited by ProRS. This is Proline--tRNA ligase from Haemophilus influenzae (strain PittEE).